The primary structure comprises 457 residues: BAG family molecular chaperone regulator 4 (457 aa).

A disordered region spans residues 1–101; that stretch reads MSALRRSGYG…QPPYPSYNSN (101 aa). Ser-7 bears the Phosphoserine mark. Low complexity predominate over residues 8-20; it reads GYGPSDGPSYGRY. The segment covering 30–47 has biased composition (pro residues); it reads VHPPPPLYPLRPEPPQPP. Omega-N-methylarginine occurs at positions 40, 53, and 108. Disordered stretches follow at residues 113-136, 166-333, and 347-377; these read YPST…NGAY, STEV…DDSD, and LYGN…ESTP. Residues 166 to 182 show a composition bias toward polar residues; sequence STEVPSTYRSSGNSPTP. The residue at position 185 (Arg-185) is an Omega-N-methylarginine. Low complexity-rich tracts occupy residues 274–284 and 294–308; these read STSPWPSSGSP and QPKD…SDQS. Composition is skewed to polar residues over residues 320 to 333 and 347 to 365; these read QYES…DDSD and LYGN…SSSL. Positions 379-456 constitute a BAG domain; sequence SIKKIIHVLE…AILEKLEKKG (78 aa).

Binds to the ATPase domain of HSP/HSC70 chaperones. Binds to the death domain of TNFRSF1A in the absence of TNF and thereby prevents binding of adapter molecules such as TRADD or TRAF2. Binds to the death domain of TNFRSF12. Interacts with PRKN. Ubiquitous.

Its subcellular location is the cytoplasm. Inhibits the chaperone activity of HSP70/HSC70 by promoting substrate release. Prevents constitutive TNFRSF1A signaling. Negative regulator of PRKN translocation to damaged mitochondria. This is BAG family molecular chaperone regulator 4 (BAG4) from Homo sapiens (Human).